Here is a 231-residue protein sequence, read N- to C-terminus: MLHASTIWHLRSTPPRRKQWGHCDPHRILVASEVTTEITSPTPAPRAQVCGGQPWVTVLDPLSGHTGREAERHFATVSISAVELKYCHGWRPAGQRVPSKTATGQRTCAKPCQKPSTSKVILRAVADKGTCKYVSLATLKKAVSTTGYDMARNAYHFKRVLKGLVDKGSAGSFTLGKKQASKSKLKVKRQRQQRWRSGQRPFGQHRSLLGSKQGHKRLIKGVRRVAKCHCN.

The 65-residue stretch at 113–177 (QKPSTSKVIL…GSAGSFTLGK (65 aa)) folds into the H15 domain. Ser135 carries the post-translational modification Phosphoserine. The interval 177-214 (KKQASKSKLKVKRQRQQRWRSGQRPFGQHRSLLGSKQG) is disordered. Residues 179-194 (QASKSKLKVKRQRQQR) show a composition bias toward basic residues.

Belongs to the histone H1/H5 family. Expressed exclusively in the testis.

The protein localises to the nucleus. It is found in the chromosome. DNA-binding protein that may be implicated in chromatin remodeling and/or transcriptional regulation during spermiogenesis, the process of spermatid maturation into spermatozoa. The sequence is that of Putative histone H1.9 from Homo sapiens (Human).